A 390-amino-acid polypeptide reads, in one-letter code: S-adenosylmethionine synthase 4 (390 aa).

Position 9 (glutamate 9) interacts with Mg(2+). Histidine 15 is a binding site for ATP. K(+) is bound at residue glutamate 43. L-methionine contacts are provided by glutamate 56 and glutamine 99. ATP-binding positions include 167 to 169 (DGK), 235 to 238 (SGRF), aspartate 246, 252 to 253 (RK), alanine 269, lysine 273, and lysine 277. L-methionine is bound at residue aspartate 246. Lysine 277 is an L-methionine binding site.

Belongs to the AdoMet synthase family. Homotetramer. Requires Mn(2+) as cofactor. Mg(2+) is required as a cofactor. It depends on Co(2+) as a cofactor. The cofactor is K(+). Mostly expressed in flowers, seedpods and roots, and, to a lower extent, in stems and leaves.

It localises to the cytoplasm. The catalysed reaction is L-methionine + ATP + H2O = S-adenosyl-L-methionine + phosphate + diphosphate. It participates in amino-acid biosynthesis; S-adenosyl-L-methionine biosynthesis; S-adenosyl-L-methionine from L-methionine: step 1/1. In terms of biological role, catalyzes the formation of S-adenosylmethionine from methionine and ATP. The reaction comprises two steps that are both catalyzed by the same enzyme: formation of S-adenosylmethionine (AdoMet) and triphosphate, and subsequent hydrolysis of the triphosphate. This Brassica juncea (Indian mustard) protein is S-adenosylmethionine synthase 4 (MSAMS4).